We begin with the raw amino-acid sequence, 154 residues long: Proteasome subunit beta type-4 (154 aa).

N-acetylmethionine is present on methionine 1. Residues 1-45 (MESILESRSGHWAGGPAPGQFYRIPPTPGSIVDPXSVLYGSPITR) constitute a propeptide that is removed on maturation. Tyrosine 102 carries the phosphotyrosine modification.

The protein belongs to the peptidase T1B family. As to quaternary structure, the 26S proteasome consists of a 20S proteasome core and two 19S regulatory subunits. The 20S proteasome core is a barrel-shaped complex made of 28 subunits that are arranged in four stacked rings. The two outer rings are each formed by seven alpha subunits, and the two inner rings are formed by seven beta subunits. The proteolytic activity is exerted by three beta-subunits PSMB5, PSMB6 and PSMB7. Forms a ternary complex with SMAD1 and OAZ1 before PSMB4 is incorporated into the 20S proteasome. Interacts with PRPF19.

Its subcellular location is the cytoplasm. The protein localises to the nucleus. Functionally, non-catalytic component of the 20S core proteasome complex involved in the proteolytic degradation of most intracellular proteins. This complex plays numerous essential roles within the cell by associating with different regulatory particles. Associated with two 19S regulatory particles, forms the 26S proteasome and thus participates in the ATP-dependent degradation of ubiquitinated proteins. The 26S proteasome plays a key role in the maintenance of protein homeostasis by removing misfolded or damaged proteins that could impair cellular functions, and by removing proteins whose functions are no longer required. Associated with the PA200 or PA28, the 20S proteasome mediates ubiquitin-independent protein degradation. This type of proteolysis is required in several pathways including spermatogenesis (20S-PA200 complex) or generation of a subset of MHC class I-presented antigenic peptides (20S-PA28 complex). SMAD1/OAZ1/PSMB4 complex mediates the degradation of the CREBBP/EP300 repressor SNIP1. This chain is Proteasome subunit beta type-4 (PSMB4), found in Sus scrofa (Pig).